A 349-amino-acid polypeptide reads, in one-letter code: Small ribosomal subunit protein uS2 (349 aa).

The protein belongs to the universal ribosomal protein uS2 family.

This Methylocella silvestris (strain DSM 15510 / CIP 108128 / LMG 27833 / NCIMB 13906 / BL2) protein is Small ribosomal subunit protein uS2.